The chain runs to 470 residues: 63 kDa sperm flagellar membrane protein (470 aa).

The signal sequence occupies residues 1–25 (MFCHLHCMLVVFSLLLTLTGSFVNA). An EGF-like 1 domain is found at 41–80 (PPDPCASNPCTIASTHCVAAGESHTCECRPGYFETNGNCT). Intrachain disulfides connect Cys-45–Cys-57, Cys-50–Cys-66, and Cys-68–Cys-79. Residues Asn-78, Asn-170, and Asn-219 are each glycosylated (N-linked (GlcNAc...) asparagine). Residues 81-205 (VAQQFAGSFS…STITVSDFDE (125 aa)) form the SEA domain. Positions 202 to 250 (DFDECASADDNDCDPNANCTNTAGSFTCECDTELYDNSPNTEEPGRVCI) constitute an EGF-like 2; calcium-binding domain. 6 disulfides stabilise this stretch: Cys-206–Cys-220, Cys-214–Cys-229, Cys-231–Cys-249, Cys-253–Cys-265, Cys-258–Cys-277, and Cys-279–Cys-291. In terms of domain architecture, EGF-like 3 spans 249 to 292 (CIAPCDPGLCTRPNEICNNGGTIEDDNLCKCIEGYDYTQYGDCD). A glycan (N-linked (GlcNAc...) asparagine) is linked at Asn-322. Gly-446 carries GPI-anchor amidated glycine lipidation. Residues 447–470 (SQRHLPVCGVLSLVVTTLLALMLH) constitute a propeptide, removed in mature form.

As to expression, sperm.

It localises to the cell projection. The protein localises to the cilium. It is found in the flagellum membrane. The polypeptide is 63 kDa sperm flagellar membrane protein (Strongylocentrotus purpuratus (Purple sea urchin)).